We begin with the raw amino-acid sequence, 454 residues long: Probable spastin homolog Bm1_53365 (454 aa).

218 to 225 lines the ATP pocket; that stretch reads GPPGNGKT.

The protein belongs to the AAA ATPase family. Spastin subfamily. In terms of assembly, homohexamer. The homohexamer is stabilized by ATP-binding. The homohexamer may adopt a ring conformation through which microtubules pass prior to being severed. Interacts with microtubules.

Its subcellular location is the cytoplasm. The protein localises to the cytoskeleton. It is found in the perinuclear region. The enzyme catalyses n ATP + n H2O + a microtubule = n ADP + n phosphate + (n+1) alpha/beta tubulin heterodimers.. Its function is as follows. Severs microtubules, probably in an ATP-dependent fashion. The sequence is that of Probable spastin homolog Bm1_53365 from Brugia malayi (Filarial nematode worm).